The following is a 248-amino-acid chain: 2,3-bisphosphoglycerate-dependent phosphoglycerate mutase (248 aa).

Substrate contacts are provided by residues 8–15, 21–22, arginine 60, 87–90, lysine 98, 114–115, and 183–184; these read RHGESEWN, TG, ERHY, RR, and GN. Catalysis depends on histidine 9, which acts as the Tele-phosphohistidine intermediate. Catalysis depends on glutamate 87, which acts as the Proton donor/acceptor.

This sequence belongs to the phosphoglycerate mutase family. BPG-dependent PGAM subfamily.

It catalyses the reaction (2R)-2-phosphoglycerate = (2R)-3-phosphoglycerate. Its pathway is carbohydrate degradation; glycolysis; pyruvate from D-glyceraldehyde 3-phosphate: step 3/5. Catalyzes the interconversion of 2-phosphoglycerate and 3-phosphoglycerate. The polypeptide is 2,3-bisphosphoglycerate-dependent phosphoglycerate mutase (Borreliella burgdorferi (strain ATCC 35210 / DSM 4680 / CIP 102532 / B31) (Borrelia burgdorferi)).